A 366-amino-acid polypeptide reads, in one-letter code: Homeobox-leucine zipper protein HOX21 (366 aa).

2 disordered regions span residues 25–81 and 94–132; these read QQAA…SSAQ and MLGK…EKKR. Basic residues predominate over residues 36-48; that stretch reads HHHHHHHGHHGHH. Over residues 62-74 the composition is skewed to pro residues; it reads GPPPPPPPHPHNP. The span at 103 to 115 shows a compositional bias: gly residues; the sequence is GDGGGGGDEVNGG. Positions 127-186 form a DNA-binding region, homeobox; sequence AGEKKRRLNVEQVRTLEKNFELGNKLEPERKMQLARALGLQPRQVAIWFQNRRARWKTKQ. The tract at residues 185–229 is leucine-zipper; the sequence is KQLEKDYDALKRQLDAVKAENDALLNHNKKLQAEIVALKGREAAS. Disordered regions lie at residues 239–287 and 312–336; these read EASC…GGGG and LHSS…VQAA. A compositionally biased stretch (polar residues) spans 240–252; it reads ASCSNRSENSSEI.

It belongs to the HD-ZIP homeobox family. Class I subfamily. In terms of tissue distribution, expressed in seedlings, roots, stems, leaf blades and panicles.

Its subcellular location is the nucleus. In terms of biological role, probable transcription factor. This is Homeobox-leucine zipper protein HOX21 (HOX21) from Oryza sativa subsp. japonica (Rice).